The chain runs to 152 residues: Large ribosomal subunit protein bL34c (152 aa).

A chloroplast-targeting transit peptide spans Met1 to Ala91.

In terms of assembly, component of the chloroplast large ribosomal subunit (LSU). Mature 70S chloroplast ribosomes of higher plants consist of a small (30S) and a large (50S) subunit. The 30S small subunit contains 1 molecule of ribosomal RNA (16S rRNA) and 24 different proteins. The 50S large subunit contains 3 rRNA molecules (23S, 5S and 4.5S rRNA) and 33 different proteins.

The protein resides in the plastid. Its subcellular location is the chloroplast. Its function is as follows. Component of the chloroplast ribosome (chloro-ribosome), a dedicated translation machinery responsible for the synthesis of chloroplast genome-encoded proteins, including proteins of the transcription and translation machinery and components of the photosynthetic apparatus. The sequence is that of Large ribosomal subunit protein bL34c (RPL34) from Spinacia oleracea (Spinach).